A 377-amino-acid chain; its full sequence is UPF0754 membrane protein GTNG_0550 (377 aa).

The next 2 helical transmembrane spans lie at L7–V27 and Y357–L377.

The protein belongs to the UPF0754 family.

Its subcellular location is the cell membrane. The sequence is that of UPF0754 membrane protein GTNG_0550 from Geobacillus thermodenitrificans (strain NG80-2).